A 236-amino-acid chain; its full sequence is Leucyl/phenylalanyl-tRNA--protein transferase (236 aa).

The protein belongs to the L/F-transferase family.

The protein localises to the cytoplasm. It catalyses the reaction N-terminal L-lysyl-[protein] + L-leucyl-tRNA(Leu) = N-terminal L-leucyl-L-lysyl-[protein] + tRNA(Leu) + H(+). It carries out the reaction N-terminal L-arginyl-[protein] + L-leucyl-tRNA(Leu) = N-terminal L-leucyl-L-arginyl-[protein] + tRNA(Leu) + H(+). The enzyme catalyses L-phenylalanyl-tRNA(Phe) + an N-terminal L-alpha-aminoacyl-[protein] = an N-terminal L-phenylalanyl-L-alpha-aminoacyl-[protein] + tRNA(Phe). In terms of biological role, functions in the N-end rule pathway of protein degradation where it conjugates Leu, Phe and, less efficiently, Met from aminoacyl-tRNAs to the N-termini of proteins containing an N-terminal arginine or lysine. The chain is Leucyl/phenylalanyl-tRNA--protein transferase from Shewanella sediminis (strain HAW-EB3).